Consider the following 128-residue polypeptide: Probable 4-amino-4-deoxy-L-arabinose-phosphoundecaprenol flippase subunit ArnF (128 aa).

Residues 1 to 2 lie on the Cytoplasmic side of the membrane; sequence MG. Residues 3–23 form a helical membrane-spanning segment; the sequence is LMWGLFSVIIASAAQLSLGFA. The Periplasmic portion of the chain corresponds to 24–35; sequence ASHLPPMTHLWD. Residues 36–56 traverse the membrane as a helical segment; that stretch reads FIAALLAFGLDARILLLGLLG. Over 57-76 the chain is Cytoplasmic; that stretch reads YLLSVFCWYKTLHKLALSKA. Residues 77-97 traverse the membrane as a helical segment; the sequence is YALLSMSYVLVWIASMVLPGW. The Periplasmic segment spans residues 98–100; that stretch reads EGT. The helical transmembrane segment at 101-121 threads the bilayer; that stretch reads FSLKALLGVACIMSGLMLIFL. The Cytoplasmic portion of the chain corresponds to 122–128; it reads PTTKQRY.

This sequence belongs to the ArnF family. In terms of assembly, heterodimer of ArnE and ArnF.

The protein localises to the cell inner membrane. The protein operates within bacterial outer membrane biogenesis; lipopolysaccharide biosynthesis. Translocates 4-amino-4-deoxy-L-arabinose-phosphoundecaprenol (alpha-L-Ara4N-phosphoundecaprenol) from the cytoplasmic to the periplasmic side of the inner membrane. This chain is Probable 4-amino-4-deoxy-L-arabinose-phosphoundecaprenol flippase subunit ArnF, found in Escherichia coli O127:H6 (strain E2348/69 / EPEC).